A 324-amino-acid polypeptide reads, in one-letter code: uncharacterized protein (324 aa).

Transmembrane regions (helical) follow at residues 4–24 (GNKVVISWIVSIGFVGMPEFM), 63–83 (AALLLEYGWVLLVLIGLEGIL), 106–128 (ALFYGLAGAFVLRFGSLFAISFL), 132–151 (WQVQAIGAIYLLYISASHLL), 179–199 (LADIAFAVDSILAAVALAVTL), 209–229 (GLDGGQFLVILAGGIIGLVIM), 246–266 (LETAAFVIVGWVGVKLALYTL), and 282–302 (GTWKLIFWGVLAAIAVCGWFM).

This sequence belongs to the TerC family.

The protein resides in the cell membrane. This is an uncharacterized protein from Bacillus subtilis (strain 168).